We begin with the raw amino-acid sequence, 119 residues long: Protein MRP-126 (119 aa).

EF-hand domains are found at residues 23–58 (DVFHQYSRREGDKDTLTRKELKLLIEKQLANYLKHV) and 59–94 (KNQVSIDQIFKDLDNNKDQQLSFGEVMLLIIRVTVA). Positions 37, 42, 72, 74, 76, 78, and 83 each coordinate Ca(2+).

Belongs to the S-100 family. In terms of tissue distribution, expressed in v-myb-transformed myelomonocytic cells.

The sequence is that of Protein MRP-126 from Gallus gallus (Chicken).